Here is a 307-residue protein sequence, read N- to C-terminus: Thioredoxin-related transmembrane protein 2-B (307 aa).

The signal sequence occupies residues 1–19 (MALLTPLFAFLYHLPQVYK). Topologically, residues 20–111 (WLLKPYYIAS…VILFFRLDIR (92 aa)) are extracellular. Residues 112–132 (LGLLYLTLCIVFLMTCKPPLY) traverse the membrane as a helical segment. A Thioredoxin domain is found at 132-269 (YMGPEYIKYF…LYQKSKKLGK (138 aa)). Residues 133 to 307 (MGPEYIKYFS…AMDTESKKDK (175 aa)) lie on the Cytoplasmic side of the membrane. The interval 268–307 (GKTKEKLERPSELVFSTVPEEEEPEAETISAMDTESKKDK) is disordered. Residues 269-278 (KTKEKLERPS) show a composition bias toward basic and acidic residues. The Di-lysine motif signature appears at 304-307 (KKDK).

In terms of assembly, monomer. Homodimer; disulfide-linked. Occurs in both reduced and oxidized monomeric form. Oxidative conditions increase homodimerization.

It localises to the endoplasmic reticulum membrane. The protein localises to the mitochondrion membrane. Its function is as follows. Endoplasmic reticulum and mitochondria-associated protein that probably functions as a regulator of cellular redox state and thereby regulates protein post-translational modification, protein folding and mitochondrial activity. This is Thioredoxin-related transmembrane protein 2-B (tmx2b) from Danio rerio (Zebrafish).